The primary structure comprises 217 residues: High frequency lysogenization protein HflD homolog (217 aa).

Belongs to the HflD family.

It is found in the cytoplasm. The protein resides in the cell membrane. This is High frequency lysogenization protein HflD homolog from Buchnera aphidicola subsp. Baizongia pistaciae (strain Bp).